The chain runs to 463 residues: Probable glycosyltransferase 3 (463 aa).

Residues 1–24 (MAVTGGGRPAVRQQAARGKQMQRT) lie on the Cytoplasmic side of the membrane. The chain crosses the membrane as a helical; Signal-anchor for type II membrane protein span at residues 25 to 47 (FNNVKITLICGFITLLVLRGTVG). Topologically, residues 48–463 (INLLTYGVGG…ALKMDAKIES (416 aa)) are lumenal. The interval 82-125 (EIRSDTDDDDDDEEEEPLGVDASTTTTTNSTTTTATAARRRSSN) is disordered. Residues 87 to 99 (TDDDDDDEEEEPL) show a composition bias toward acidic residues. Low complexity predominate over residues 103-118 (ASTTTTTNSTTTTATA). 3 N-linked (GlcNAc...) asparagine glycosylation sites follow: asparagine 110, asparagine 125, and asparagine 442.

Belongs to the glycosyltransferase 34 family.

The protein resides in the golgi apparatus membrane. In terms of biological role, probable glycosyltransferase that may be involved in the biosynthesis of xyloglucan. The protein is Probable glycosyltransferase 3 of Oryza sativa subsp. japonica (Rice).